Consider the following 364-residue polypeptide: Uroporphyrinogen decarboxylase (364 aa).

Substrate contacts are provided by residues 28-32 (RQAGR), aspartate 78, tyrosine 160, threonine 215, and histidine 333.

Belongs to the uroporphyrinogen decarboxylase family. Homodimer.

It is found in the cytoplasm. It carries out the reaction uroporphyrinogen III + 4 H(+) = coproporphyrinogen III + 4 CO2. Its pathway is porphyrin-containing compound metabolism; protoporphyrin-IX biosynthesis; coproporphyrinogen-III from 5-aminolevulinate: step 4/4. Catalyzes the decarboxylation of four acetate groups of uroporphyrinogen-III to yield coproporphyrinogen-III. The sequence is that of Uroporphyrinogen decarboxylase from Burkholderia pseudomallei (strain 668).